Here is a 137-residue protein sequence, read N- to C-terminus: Large ribosomal subunit protein uL16 (137 aa).

Belongs to the universal ribosomal protein uL16 family. In terms of assembly, part of the 50S ribosomal subunit.

Binds 23S rRNA and is also seen to make contacts with the A and possibly P site tRNAs. This Streptococcus uberis (strain ATCC BAA-854 / 0140J) protein is Large ribosomal subunit protein uL16.